Reading from the N-terminus, the 466-residue chain is Trigger factor (466 aa).

A PPIase FKBP-type domain is found at 162–243 (GDVVSIDLSA…VRSVKERELP (82 aa)). The interval 428–466 (GNTIDTSEFFGKRVSAGEAEEAEPADEGAARAASDEATT) is disordered. Low complexity predominate over residues 457–466 (ARAASDEATT).

Belongs to the FKBP-type PPIase family. Tig subfamily.

The protein localises to the cytoplasm. The catalysed reaction is [protein]-peptidylproline (omega=180) = [protein]-peptidylproline (omega=0). Functionally, involved in protein export. Acts as a chaperone by maintaining the newly synthesized protein in an open conformation. Functions as a peptidyl-prolyl cis-trans isomerase. This Mycobacterium bovis (strain BCG / Tokyo 172 / ATCC 35737 / TMC 1019) protein is Trigger factor.